The chain runs to 1430 residues: rRNA biogenesis protein RRP5 (1430 aa).

S1 motif domains lie at 74–160, 176–238, 261–329, 447–511, 531–592, and 697–771; these read DMLV…LSLK, GFIF…CTCV, GSIV…LTLN, GDLV…VSNR, GNVY…LTLP, and QVGD…VSAK. The disordered stretch occupies residues 1041-1145; that stretch reads KITNGQKKTQ…AKEKAKAEIK (105 aa). Residues 1043–1053 show a composition bias toward polar residues; the sequence is TNGQKKTQPLT. Basic and acidic residues-rich tracts occupy residues 1057 to 1082 and 1135 to 1145; these read VKEKPKQNGKLFFEDKTPAKNAKSET and SAKEKAKAEIK. Positions 1119-1157 form a coiled coil; that stretch reads LNVAETQKNAAKKKRLSAKEKAKAEIKEEQRLREIEERN. HAT repeat units follow at residues 1161–1193, 1195–1232, 1265–1297, 1299–1333, 1335–1367, and 1369–1404; these read KARLETIDQYERLVIAQPNNSISWLKYIAFLLS, TEIEKARALARRAISTISFRETQELRNMWSALLNMELV, KRKDRLSSVLTTVLNKFKTELRVWPVAAEAYFW, GKSDQVHNLLQRALRALPNQEHIPCIVSFAKLYAK, DNNDMAQTLLDDVVTSYPKRIDIWSVYVDMLIK, and GLIDSARNVLERAVVQKLKPNKMQVIYKKYLQLEEN.

It localises to the nucleus. It is found in the nucleolus. Involved in rRNA processing or maturation during ribosome biogenesis. The chain is rRNA biogenesis protein RRP5 from Drosophila melanogaster (Fruit fly).